A 394-amino-acid chain; its full sequence is Acetate kinase (394 aa).

Asparagine 10 serves as a coordination point for Mg(2+). ATP is bound at residue lysine 17. A substrate-binding site is contributed by arginine 87. Catalysis depends on aspartate 144, which acts as the Proton donor/acceptor. ATP contacts are provided by residues 204–208 (HLGNG), 279–281 (DMR), and 327–331 (GIGEN). Position 381 (glutamate 381) interacts with Mg(2+).

This sequence belongs to the acetokinase family. As to quaternary structure, homodimer. Mg(2+) serves as cofactor. The cofactor is Mn(2+).

The protein resides in the cytoplasm. It catalyses the reaction acetate + ATP = acetyl phosphate + ADP. It functions in the pathway metabolic intermediate biosynthesis; acetyl-CoA biosynthesis; acetyl-CoA from acetate: step 1/2. Its function is as follows. Catalyzes the formation of acetyl phosphate from acetate and ATP. Can also catalyze the reverse reaction. In Pseudomonas aeruginosa (strain LESB58), this protein is Acetate kinase.